Here is a 164-residue protein sequence, read N- to C-terminus: MDLITPDFGIIFWQTITLLFVLFILGKFGWKPILQTLKKRETHIEEALKGAEEAKQLLAQLKSEQEKLLEKSNREREKIISDAVATKNDILETAQMEARQLSDKVLKEAREVINTEKEIAFGKLKHEIFLISVQVAEKLLEKELNTENKQEELVRRLIKETHLN.

Residues 8–28 (FGIIFWQTITLLFVLFILGKF) form a helical membrane-spanning segment.

The protein belongs to the ATPase B chain family. As to quaternary structure, F-type ATPases have 2 components, F(1) - the catalytic core - and F(0) - the membrane proton channel. F(1) has five subunits: alpha(3), beta(3), gamma(1), delta(1), epsilon(1). F(0) has three main subunits: a(1), b(2) and c(10-14). The alpha and beta chains form an alternating ring which encloses part of the gamma chain. F(1) is attached to F(0) by a central stalk formed by the gamma and epsilon chains, while a peripheral stalk is formed by the delta and b chains.

It localises to the cell membrane. Its function is as follows. F(1)F(0) ATP synthase produces ATP from ADP in the presence of a proton or sodium gradient. F-type ATPases consist of two structural domains, F(1) containing the extramembraneous catalytic core and F(0) containing the membrane proton channel, linked together by a central stalk and a peripheral stalk. During catalysis, ATP synthesis in the catalytic domain of F(1) is coupled via a rotary mechanism of the central stalk subunits to proton translocation. In terms of biological role, component of the F(0) channel, it forms part of the peripheral stalk, linking F(1) to F(0). In Amoebophilus asiaticus (strain 5a2), this protein is ATP synthase subunit b.